The primary structure comprises 747 residues: Elastin (747 aa).

An N-terminal signal peptide occupies residues 1-26; sequence MRSLTAAARRPEVLLLLLCILQPSQP. 4-hydroxyproline occurs at positions 34, 65, and 87. Residues K105 and K109 each carry the allysine modification. Residues P165, P178, and P181 each carry the 4-hydroxyproline modification. Residue P188 is modified to Hydroxyproline. P201 carries the post-translational modification 4-hydroxyproline. An allysine mark is found at K252, K271, and K275. Residues P298 and P302 each carry the 4-hydroxyproline modification. Allysine occurs at positions 324 and 327. 4-hydroxyproline occurs at positions 335, 365, 370, 375, 380, and 385. Allysine occurs at positions 400, 404, 407, 445, and 448. Residues P462 and P478 each carry the 4-hydroxyproline modification. K489 and K493 each carry allysine. P513 is subject to 4-hydroxyproline. Allysine is present on residues K544, K548, and K552. P566, P575, P584, P593, and P599 each carry 4-hydroxyproline. K606 and K609 each carry allysine. 4-hydroxyproline is present on P630. Allysine occurs at positions 645, 649, 685, and 688. P719 and P733 each carry 4-hydroxyproline. C737 and C742 are oxidised to a cystine.

It belongs to the elastin family. The polymeric elastin chains are cross-linked together into an extensible 3D network. Forms a ternary complex with BGN and MFAP2. Interacts with MFAP2 via divalent cations (calcium &gt; magnesium &gt; manganese) in a dose-dependent and saturating manner. Interacts with FBLN5 and FBN1. Forms a ternary complex with FBN1 and FBLN2 or FBLN5. Interacts with MFAP4 in a Ca (2+)-dependent manner; this interaction promotes ELN self-assembly. Interacts with EFEMP2 with moderate affinity. Post-translationally, elastin is formed through the cross-linking of its soluble precursor tropoelastin. Cross-linking is initiated through the action of lysyl oxidase on exposed lysines to form allysine. Subsequent spontaneous condensation reactions with other allysine or unmodified lysine residues result in various bi-, tri-, and tetrafunctional cross-links. The most abundant cross-links in mature elastin fibers are lysinonorleucine, allysine aldol, desmosine, and isodesmosine. Hydroxylation on proline residues within the sequence motif, GXPG, is most likely to be 4-hydroxy as this fits the requirement for 4-hydroxylation in vertebrates.

The protein resides in the secreted. It localises to the extracellular space. The protein localises to the extracellular matrix. Functionally, major structural protein of tissues such as aorta and nuchal ligament, which must expand rapidly and recover completely. Molecular determinant of the late arterial morphogenesis, stabilizing arterial structure by regulating proliferation and organization of vascular smooth muscle. The protein is Elastin (ELN) of Bos taurus (Bovine).